A 158-amino-acid chain; its full sequence is Transcription factor BTF3 homolog 4 (158 aa).

One can recognise an NAC-A/B domain in the interval 33-98; that stretch reads TADDKKLQSS…AEVKQITEML (66 aa). The interval 123 to 158 is disordered; sequence QVLDSKASKPEDIEEEDDDVPELVGNFDEASKNEAN. Acidic residues predominate over residues 134 to 143; sequence DIEEEDDDVP.

It belongs to the NAC-beta family.

The polypeptide is Transcription factor BTF3 homolog 4 (btf3l4) (Xenopus laevis (African clawed frog)).